A 290-amino-acid polypeptide reads, in one-letter code: Ribosomal RNA small subunit methyltransferase A (290 aa).

The S-adenosyl-L-methionine site is built by Asn27, Leu29, Gly54, Glu75, Asp100, and Asn125.

Belongs to the class I-like SAM-binding methyltransferase superfamily. rRNA adenine N(6)-methyltransferase family. RsmA subfamily.

The protein resides in the cytoplasm. The enzyme catalyses adenosine(1518)/adenosine(1519) in 16S rRNA + 4 S-adenosyl-L-methionine = N(6)-dimethyladenosine(1518)/N(6)-dimethyladenosine(1519) in 16S rRNA + 4 S-adenosyl-L-homocysteine + 4 H(+). In terms of biological role, specifically dimethylates two adjacent adenosines (A1518 and A1519) in the loop of a conserved hairpin near the 3'-end of 16S rRNA in the 30S particle. May play a critical role in biogenesis of 30S subunits. In Streptococcus pneumoniae (strain P1031), this protein is Ribosomal RNA small subunit methyltransferase A.